A 219-amino-acid chain; its full sequence is Auxin-responsive protein IAA24 (219 aa).

The EAR-like (transcriptional repression) motif lies at 24 to 28 (LCLRL). Disordered regions lie at residues 24–88 (LCLR…AKAQ) and 109–128 (AAAA…QQGG). Residues 60–71 (STDSMASGTGTS) are compositionally biased toward polar residues. Residues 129–215 (GLYVKVSMDG…SCKKLRIMKG (87 aa)) form the PB1 domain.

The protein belongs to the Aux/IAA family. As to quaternary structure, homodimers and heterodimers. In terms of tissue distribution, highly expressed in flowers. Expressed in seedlings.

The protein resides in the nucleus. Its function is as follows. Aux/IAA proteins are short-lived transcriptional factors that function as repressors of early auxin response genes at low auxin concentrations. This is Auxin-responsive protein IAA24 (IAA24) from Oryza sativa subsp. japonica (Rice).